A 144-amino-acid polypeptide reads, in one-letter code: Endoribonuclease YbeY (144 aa).

Residues His105, His109, and Asp115 each contribute to the Zn(2+) site.

This sequence belongs to the endoribonuclease YbeY family. Zn(2+) serves as cofactor.

The protein localises to the cytoplasm. Functionally, single strand-specific metallo-endoribonuclease involved in late-stage 70S ribosome quality control and in maturation of the 3' terminus of the 16S rRNA. This is Endoribonuclease YbeY from Chlorobium limicola (strain DSM 245 / NBRC 103803 / 6330).